We begin with the raw amino-acid sequence, 190 residues long: Elongation factor P (190 aa).

It belongs to the elongation factor P family.

Its subcellular location is the cytoplasm. It functions in the pathway protein biosynthesis; polypeptide chain elongation. Involved in peptide bond synthesis. Stimulates efficient translation and peptide-bond synthesis on native or reconstituted 70S ribosomes in vitro. Probably functions indirectly by altering the affinity of the ribosome for aminoacyl-tRNA, thus increasing their reactivity as acceptors for peptidyl transferase. In Amoebophilus asiaticus (strain 5a2), this protein is Elongation factor P.